The chain runs to 384 residues: 5-amino-6-(D-ribitylamino)uracil--L-tyrosine 4-hydroxyphenyl transferase 2 (384 aa).

The 234-residue stretch at Val53–Thr286 folds into the Radical SAM core domain. [4Fe-4S] cluster is bound by residues Cys67, Cys71, and Cys74.

It belongs to the radical SAM superfamily. CofH family. In terms of assembly, consists of two subunits, CofG and CofH. It depends on [4Fe-4S] cluster as a cofactor.

It carries out the reaction 5-amino-6-(D-ribitylamino)uracil + L-tyrosine + S-adenosyl-L-methionine = 5-amino-5-(4-hydroxybenzyl)-6-(D-ribitylimino)-5,6-dihydrouracil + 2-iminoacetate + 5'-deoxyadenosine + L-methionine + H(+). It functions in the pathway cofactor biosynthesis; coenzyme F0 biosynthesis. Its function is as follows. Catalyzes the radical-mediated synthesis of 5-amino-5-(4-hydroxybenzyl)-6-(D-ribitylimino)-5,6-dihydrouracil from 5-amino-6-(D-ribitylamino)uracil and L-tyrosine. This is 5-amino-6-(D-ribitylamino)uracil--L-tyrosine 4-hydroxyphenyl transferase 2 from Methanosarcina mazei (strain ATCC BAA-159 / DSM 3647 / Goe1 / Go1 / JCM 11833 / OCM 88) (Methanosarcina frisia).